The primary structure comprises 450 residues: tRNA modification GTPase MnmE (450 aa).

Residues lysine 21, glutamate 78, and lysine 117 each contribute to the (6S)-5-formyl-5,6,7,8-tetrahydrofolate site. A TrmE-type G domain is found at 213–376; it reads GHALSIIGKP…LSQKISAFFP (164 aa). Residue asparagine 223 participates in K(+) binding. Residues 223–228, 242–248, and 267–270 each bind GTP; these read NAGKSS, SDIKGTT, and DTAG. Serine 227 lines the Mg(2+) pocket. K(+)-binding residues include serine 242, isoleucine 244, and threonine 247. A Mg(2+)-binding site is contributed by threonine 248. Lysine 450 contacts (6S)-5-formyl-5,6,7,8-tetrahydrofolate.

This sequence belongs to the TRAFAC class TrmE-Era-EngA-EngB-Septin-like GTPase superfamily. TrmE GTPase family. Homodimer. Heterotetramer of two MnmE and two MnmG subunits. Requires K(+) as cofactor.

Its subcellular location is the cytoplasm. Its function is as follows. Exhibits a very high intrinsic GTPase hydrolysis rate. Involved in the addition of a carboxymethylaminomethyl (cmnm) group at the wobble position (U34) of certain tRNAs, forming tRNA-cmnm(5)s(2)U34. This is tRNA modification GTPase MnmE from Helicobacter acinonychis (strain Sheeba).